Reading from the N-terminus, the 373-residue chain is Flagellar P-ring protein (373 aa).

The first 27 residues, 1–27 (MPSFSPTLLKLAAAALSALLLSGVAAS), serve as a signal peptide directing secretion.

Belongs to the FlgI family. The basal body constitutes a major portion of the flagellar organelle and consists of four rings (L,P,S, and M) mounted on a central rod.

It localises to the periplasm. The protein localises to the bacterial flagellum basal body. Functionally, assembles around the rod to form the L-ring and probably protects the motor/basal body from shearing forces during rotation. This chain is Flagellar P-ring protein, found in Rhodopseudomonas palustris (strain BisB5).